The sequence spans 482 residues: Catalase easC (482 aa).

The active site involves His-58. Tyr-347 provides a ligand contact to heme.

Belongs to the catalase family. Heme serves as cofactor.

Its pathway is alkaloid biosynthesis; ergot alkaloid biosynthesis. In terms of biological role, catalase; part of the gene cluster that mediates the biosynthesis of fungal ergot alkaloid. DmaW catalyzes the first step of ergot alkaloid biosynthesis by condensing dimethylallyl diphosphate (DMAP) and tryptophan to form 4-dimethylallyl-L-tryptophan. The second step is catalyzed by the methyltransferase easF that methylates 4-dimethylallyl-L-tryptophan in the presence of S-adenosyl-L-methionine, resulting in the formation of 4-dimethylallyl-L-abrine. The catalase easC and the FAD-dependent oxidoreductase easE then transform 4-dimethylallyl-L-abrine to chanoclavine-I which is further oxidized by easD in the presence of NAD(+), resulting in the formation of chanoclavine-I aldehyde. Chanoclavine-I aldehyde is the precursor of ergoamides and ergopeptines in Clavicipitaceae, and clavine-type alcaloids such as fumiclavine in Trichocomaceae. However, the metabolites downstream of chanoclavine-I aldehyde in Arthrodermataceae have not been identified yet. This chain is Catalase easC, found in Arthroderma otae (strain ATCC MYA-4605 / CBS 113480) (Microsporum canis).